A 182-amino-acid chain; its full sequence is MFKYIGDIVKGTGTQLRSLVMVFGHGFRKRDTLQYPEEQVYLPPRYRGRIVLTRDPDGEERCVACNLCAVACPVGCISLQKAETEDGRWYPDFFRINFSRCIFCGLCEEACPTTAIQLTPDFEMADFKRQDLVYEKEDLLISGPGKNPDYNFYRVAGMAIGGKPKGSAQNEAEPINVKSLLP.

2 4Fe-4S ferredoxin-type domains span residues 52 to 82 (LTRDPDGEERCVACNLCAVACPVGCISLQKA) and 92 to 121 (DFFRINFSRCIFCGLCEEACPTTAIQLTPD). 8 residues coordinate [4Fe-4S] cluster: cysteine 62, cysteine 65, cysteine 68, cysteine 72, cysteine 101, cysteine 104, cysteine 107, and cysteine 111.

Belongs to the complex I 23 kDa subunit family. As to quaternary structure, NDH-1 is composed of 13 different subunits. Subunits NuoA, H, J, K, L, M, N constitute the membrane sector of the complex. The cofactor is [4Fe-4S] cluster.

It is found in the cell inner membrane. It carries out the reaction a quinone + NADH + 5 H(+)(in) = a quinol + NAD(+) + 4 H(+)(out). Functionally, NDH-1 shuttles electrons from NADH, via FMN and iron-sulfur (Fe-S) centers, to quinones in the respiratory chain. The immediate electron acceptor for the enzyme in this species is believed to be ubiquinone. Couples the redox reaction to proton translocation (for every two electrons transferred, four hydrogen ions are translocated across the cytoplasmic membrane), and thus conserves the redox energy in a proton gradient. The protein is NADH-quinone oxidoreductase subunit I of Pseudomonas savastanoi pv. phaseolicola (strain 1448A / Race 6) (Pseudomonas syringae pv. phaseolicola (strain 1448A / Race 6)).